Reading from the N-terminus, the 234-residue chain is Large ribosomal subunit protein uL1 (234 aa).

Belongs to the universal ribosomal protein uL1 family. As to quaternary structure, part of the 50S ribosomal subunit.

In terms of biological role, binds directly to 23S rRNA. The L1 stalk is quite mobile in the ribosome, and is involved in E site tRNA release. Protein L1 is also a translational repressor protein, it controls the translation of the L11 operon by binding to its mRNA. This Helicobacter acinonychis (strain Sheeba) protein is Large ribosomal subunit protein uL1.